The chain runs to 461 residues: Homocitrate synthase (461 aa).

The region spanning Val4 to Gln259 is the Pyruvate carboxyltransferase domain. Arg12 contributes to the 2-oxoglutarate binding site. Glu13 lines the Mg(2+) pocket. His76, Arg136, and Thr170 together coordinate 2-oxoglutarate. 2 residues coordinate Mg(2+): His198 and His200. Catalysis depends on His292, which acts as the Proton acceptor.

It belongs to the alpha-IPM synthase/homocitrate synthase family. Homocitrate synthase LYS20/LYS21 subfamily. It depends on Mg(2+) as a cofactor. The cofactor is Mn(2+).

The enzyme catalyses acetyl-CoA + 2-oxoglutarate + H2O = (2R)-homocitrate + CoA + H(+). Its pathway is amino-acid biosynthesis; L-lysine biosynthesis via AAA pathway; L-alpha-aminoadipate from 2-oxoglutarate: step 1/5. In terms of biological role, catalyzes the aldol-type condensation of 2-oxoglutarate with acetyl-CoA to yield homocitrate. Carries out the first step of the alpha-aminoadipate (AAA) lysine biosynthesis pathway. The protein is Homocitrate synthase of Saccharolobus solfataricus (strain ATCC 35092 / DSM 1617 / JCM 11322 / P2) (Sulfolobus solfataricus).